A 172-amino-acid polypeptide reads, in one-letter code: Adenine phosphoribosyltransferase (172 aa).

Belongs to the purine/pyrimidine phosphoribosyltransferase family. As to quaternary structure, homodimer.

It is found in the cytoplasm. The catalysed reaction is AMP + diphosphate = 5-phospho-alpha-D-ribose 1-diphosphate + adenine. Its pathway is purine metabolism; AMP biosynthesis via salvage pathway; AMP from adenine: step 1/1. Catalyzes a salvage reaction resulting in the formation of AMP, that is energically less costly than de novo synthesis. In Staphylococcus aureus (strain bovine RF122 / ET3-1), this protein is Adenine phosphoribosyltransferase.